We begin with the raw amino-acid sequence, 274 residues long: Histone H1.1 (274 aa).

2 disordered regions span residues 1–63 and 129–155; these read MSEV…SSHP and PSASAKASSPKAAAEKSAPAKKKPATV. Ser-2 is subject to N-acetylserine. The segment covering 16–25 has biased composition (low complexity); the sequence is TAADAPVTDA. The segment covering 40–49 has biased composition (basic and acidic residues); it reads NVKEVKEKKT. An H15 domain is found at 61-130; the sequence is SHPTYEEMIK…KVKASFKLPS (70 aa). The segment covering 129-145 has biased composition (low complexity); it reads PSASAKASSPKAAAEKS. A Glycyl lysine isopeptide (Lys-Gly) (interchain with G-Cter in ubiquitin) cross-link involves residue Lys-161. Disordered regions lie at residues 167–233 and 249–274; these read ASKA…PAKK and KTPVKKVVKPKTVKSPAKRASSRVKK. 2 stretches are compositionally biased toward low complexity: residues 175–185 and 221–233; these read AVKPKTAAAKK and AAKTAKVTSPAKK.

The protein belongs to the histone H1/H5 family.

Its subcellular location is the nucleus. It localises to the chromosome. Histones H1 are necessary for the condensation of nucleosome chains into higher-order structures. This is Histone H1.1 from Arabidopsis thaliana (Mouse-ear cress).